A 124-amino-acid chain; its full sequence is Small ribosomal subunit protein uS12 (124 aa).

Residues 9–28 are disordered; that stretch reads KSERTVQKNQTKSPALDSCP. Position 89 is a 3-methylthioaspartic acid (aspartate 89).

It belongs to the universal ribosomal protein uS12 family. Part of the 30S ribosomal subunit. Contacts proteins S8 and S17. May interact with IF1 in the 30S initiation complex.

In terms of biological role, with S4 and S5 plays an important role in translational accuracy. Its function is as follows. Interacts with and stabilizes bases of the 16S rRNA that are involved in tRNA selection in the A site and with the mRNA backbone. Located at the interface of the 30S and 50S subunits, it traverses the body of the 30S subunit contacting proteins on the other side and probably holding the rRNA structure together. The combined cluster of proteins S8, S12 and S17 appears to hold together the shoulder and platform of the 30S subunit. The sequence is that of Small ribosomal subunit protein uS12 from Bdellovibrio bacteriovorus (strain ATCC 15356 / DSM 50701 / NCIMB 9529 / HD100).